The chain runs to 554 residues: Probable urocanate hydratase (554 aa).

NAD(+)-binding positions include 49–50, glutamine 127, glutamate 194, 240–241, 261–265, 271–272, and tyrosine 320; these read GG, NA, QTAAH, and YI. Cysteine 408 is an active-site residue. Glycine 490 provides a ligand contact to NAD(+).

This sequence belongs to the urocanase family. It depends on NAD(+) as a cofactor.

The protein localises to the cytoplasm. It carries out the reaction 4-imidazolone-5-propanoate = trans-urocanate + H2O. The protein operates within amino-acid degradation; L-histidine degradation into L-glutamate; N-formimidoyl-L-glutamate from L-histidine: step 2/3. Its function is as follows. Catalyzes the conversion of urocanate to 4-imidazolone-5-propionate. This Thermoplasma acidophilum (strain ATCC 25905 / DSM 1728 / JCM 9062 / NBRC 15155 / AMRC-C165) protein is Probable urocanate hydratase.